Reading from the N-terminus, the 705-residue chain is Polyribonucleotide nucleotidyltransferase (705 aa).

Residues Asp-487 and Asp-493 each contribute to the Mg(2+) site. A KH domain is found at Pro-554 to Ile-613. An S1 motif domain is found at Gly-623–Lys-691.

This sequence belongs to the polyribonucleotide nucleotidyltransferase family. Mg(2+) serves as cofactor.

The protein localises to the cytoplasm. The enzyme catalyses RNA(n+1) + phosphate = RNA(n) + a ribonucleoside 5'-diphosphate. Involved in mRNA degradation. Catalyzes the phosphorolysis of single-stranded polyribonucleotides processively in the 3'- to 5'-direction. The chain is Polyribonucleotide nucleotidyltransferase from Oceanobacillus iheyensis (strain DSM 14371 / CIP 107618 / JCM 11309 / KCTC 3954 / HTE831).